A 508-amino-acid polypeptide reads, in one-letter code: Adenylosuccinate synthetase 1, chloroplastic (508 aa).

A chloroplast-targeting transit peptide spans Met-1 to Val-56. Residues Gly-95–Lys-101 and Gly-123–Thr-125 contribute to the GTP site. Residue Asp-96 is the Proton acceptor of the active site. 2 residues coordinate Mg(2+): Asp-96 and Gly-123. IMP is bound by residues Asp-96–Lys-99, Asn-121–His-124, Thr-213, Arg-227, Gln-307, Thr-322, and Arg-386. The Proton donor role is filled by His-124. Thr-382–Arg-388 is a substrate binding site. GTP contacts are provided by residues Arg-388, Lys-414–Asp-416, and Gly-497–Gly-499.

This sequence belongs to the adenylosuccinate synthetase family. Homodimer. It depends on Mg(2+) as a cofactor.

The protein resides in the plastid. It localises to the chloroplast. It catalyses the reaction IMP + L-aspartate + GTP = N(6)-(1,2-dicarboxyethyl)-AMP + GDP + phosphate + 2 H(+). The protein operates within purine metabolism; AMP biosynthesis via de novo pathway; AMP from IMP: step 1/2. Functionally, plays an important role in the de novo pathway and in the salvage pathway of purine nucleotide biosynthesis. Catalyzes the first committed step in the biosynthesis of AMP from IMP. The chain is Adenylosuccinate synthetase 1, chloroplastic from Capsicum frutescens (Cayenne pepper).